A 108-amino-acid polypeptide reads, in one-letter code: Anti-sigma-B factor antagonist (108 aa).

One can recognise an STAS domain in the interval 3–108 (LNIETITHDD…MHVNEGTEVE (106 aa)). S57 carries the post-translational modification Phosphoserine.

It belongs to the anti-sigma-factor antagonist family. In terms of processing, phosphorylated by RsbW on a serine residue.

Functionally, positive regulator of sigma-B activity. Non-phosphorylated RsbV binds to RsbW, preventing its association with sigma-B. When phosphorylated, releases RsbW, which is then free to complex with and inactivate sigma-B. The chain is Anti-sigma-B factor antagonist (rsbV) from Staphylococcus epidermidis.